The sequence spans 557 residues: 2-succinyl-5-enolpyruvyl-6-hydroxy-3-cyclohexene-1-carboxylate synthase (557 aa).

It belongs to the TPP enzyme family. MenD subfamily. Homodimer. Mg(2+) serves as cofactor. Mn(2+) is required as a cofactor. Requires thiamine diphosphate as cofactor.

It catalyses the reaction isochorismate + 2-oxoglutarate + H(+) = 5-enolpyruvoyl-6-hydroxy-2-succinyl-cyclohex-3-ene-1-carboxylate + CO2. The protein operates within quinol/quinone metabolism; 1,4-dihydroxy-2-naphthoate biosynthesis; 1,4-dihydroxy-2-naphthoate from chorismate: step 2/7. It participates in quinol/quinone metabolism; menaquinone biosynthesis. In terms of biological role, catalyzes the thiamine diphosphate-dependent decarboxylation of 2-oxoglutarate and the subsequent addition of the resulting succinic semialdehyde-thiamine pyrophosphate anion to isochorismate to yield 2-succinyl-5-enolpyruvyl-6-hydroxy-3-cyclohexene-1-carboxylate (SEPHCHC). This is 2-succinyl-5-enolpyruvyl-6-hydroxy-3-cyclohexene-1-carboxylate synthase from Staphylococcus aureus (strain USA300).